A 286-amino-acid polypeptide reads, in one-letter code: Beta-lactamase SHV-24 (286 aa).

The signal sequence occupies residues 1-21 (MRYIRLCIISLLATLPLAVHA). The active-site Acyl-ester intermediate is serine 66. An intrachain disulfide couples cysteine 73 to cysteine 119. Residue glutamate 164 is the Proton acceptor of the active site. 230–232 (KTG) contributes to the substrate binding site.

The protein belongs to the class-A beta-lactamase family.

It carries out the reaction a beta-lactam + H2O = a substituted beta-amino acid. Hydrolyzes ampicillin. Can also hydrolyze cephaloridine, aztreonam and ceftazidime with a low catalytic rate. This is Beta-lactamase SHV-24 (bla) from Escherichia coli.